Consider the following 612-residue polypeptide: Oligopeptide transport ATP-binding protein OppD (612 aa).

Residues 5–255 (LEVTDLAVTF…RRMPYTVGLL (251 aa)) form the ABC transporter 1 domain. The ATP site is built by Ser-43, Gly-44, Ser-45, Gly-46, Lys-47, Ser-48, Ala-49, Tyr-61, Gln-96, Arg-147, Gly-158, Glu-159, and His-213. 4 residues coordinate [4Fe-4S] cluster: Cys-286, Cys-292, Cys-299, and Cys-317. In terms of domain architecture, ABC transporter 2 spans 350–600 (VRVRHLVKTY…PKHEYTRRLL (251 aa)). Ser-396, Gly-397, Ser-398, Gly-399, Lys-400, Ser-401, Thr-402, Gln-445, Arg-495, Glu-499, Gly-503, and His-558 together coordinate ATP.

The protein belongs to the ABC transporter superfamily. The complex is composed of an ATP-binding protein (OppD), two transmembrane proteins (OppB and OppC) and a solute-binding protein (OppA).

It is found in the cell inner membrane. It carries out the reaction a [peptide](out) + ATP + H2O = a [peptide](in) + ADP + phosphate + H(+). Functionally, part of the ABC transporter complex OppABCD involved in the uptake of oligopeptides. Responsible for energy coupling to the transport system. In Mycobacterium bovis (strain ATCC BAA-935 / AF2122/97), this protein is Oligopeptide transport ATP-binding protein OppD.